The primary structure comprises 261 residues: MTHQLHQYHLVDPSPWPLTGAMGSLLLASGLAVWFHTNNTMLLKFGLLTLLLTMFQWWRDIIRESTYQGHHTSGVQKNMRYGMILFITSEVFFFLGFFWALYHVSLVPTPELGAEWPPIGITPLNPMEVPLLNTAVLLSSGATITWSHHTMMKGNKKEATHALMLTIILGAYFTALQLSEYMETPFTIADSVYGSLFFVATGFHGLHVMIGTSFLMVCALRLAKHHFTITHHFGYEAAIWYWHFVDIVWLFLYISVYWWGS.

Over 1–15 (MTHQLHQYHLVDPSP) the chain is Mitochondrial matrix. The chain crosses the membrane as a helical span at residues 16–34 (WPLTGAMGSLLLASGLAVW). Over 35 to 40 (FHTNNT) the chain is Mitochondrial intermembrane. A helical membrane pass occupies residues 41–66 (MLLKFGLLTLLLTMFQWWRDIIREST). Residues 67–72 (YQGHHT) are Mitochondrial matrix-facing. Residues 73–105 (SGVQKNMRYGMILFITSEVFFFLGFFWALYHVS) traverse the membrane as a helical segment. The Mitochondrial intermembrane segment spans residues 106 to 128 (LVPTPELGAEWPPIGITPLNPME). The helical transmembrane segment at 129 to 152 (VPLLNTAVLLSSGATITWSHHTMM) threads the bilayer. Over 153 to 155 (KGN) the chain is Mitochondrial matrix. The chain crosses the membrane as a helical span at residues 156–183 (KKEATHALMLTIILGAYFTALQLSEYME). Residues 184–190 (TPFTIAD) lie on the Mitochondrial intermembrane side of the membrane. The chain crosses the membrane as a helical span at residues 191–223 (SVYGSLFFVATGFHGLHVMIGTSFLMVCALRLA). Residues 224–232 (KHHFTITHH) are Mitochondrial matrix-facing. A helical transmembrane segment spans residues 233 to 256 (FGYEAAIWYWHFVDIVWLFLYISV). At 257–261 (YWWGS) the chain is on the mitochondrial intermembrane side.

Belongs to the cytochrome c oxidase subunit 3 family. Component of the cytochrome c oxidase (complex IV, CIV), a multisubunit enzyme composed of 14 subunits. The complex is composed of a catalytic core of 3 subunits MT-CO1, MT-CO2 and MT-CO3, encoded in the mitochondrial DNA, and 11 supernumerary subunits COX4I, COX5A, COX5B, COX6A, COX6B, COX6C, COX7A, COX7B, COX7C, COX8 and NDUFA4, which are encoded in the nuclear genome. The complex exists as a monomer or a dimer and forms supercomplexes (SCs) in the inner mitochondrial membrane with NADH-ubiquinone oxidoreductase (complex I, CI) and ubiquinol-cytochrome c oxidoreductase (cytochrome b-c1 complex, complex III, CIII), resulting in different assemblies (supercomplex SCI(1)III(2)IV(1) and megacomplex MCI(2)III(2)IV(2)).

It is found in the mitochondrion inner membrane. It carries out the reaction 4 Fe(II)-[cytochrome c] + O2 + 8 H(+)(in) = 4 Fe(III)-[cytochrome c] + 2 H2O + 4 H(+)(out). Its function is as follows. Component of the cytochrome c oxidase, the last enzyme in the mitochondrial electron transport chain which drives oxidative phosphorylation. The respiratory chain contains 3 multisubunit complexes succinate dehydrogenase (complex II, CII), ubiquinol-cytochrome c oxidoreductase (cytochrome b-c1 complex, complex III, CIII) and cytochrome c oxidase (complex IV, CIV), that cooperate to transfer electrons derived from NADH and succinate to molecular oxygen, creating an electrochemical gradient over the inner membrane that drives transmembrane transport and the ATP synthase. Cytochrome c oxidase is the component of the respiratory chain that catalyzes the reduction of oxygen to water. Electrons originating from reduced cytochrome c in the intermembrane space (IMS) are transferred via the dinuclear copper A center (CU(A)) of subunit 2 and heme A of subunit 1 to the active site in subunit 1, a binuclear center (BNC) formed by heme A3 and copper B (CU(B)). The BNC reduces molecular oxygen to 2 water molecules using 4 electrons from cytochrome c in the IMS and 4 protons from the mitochondrial matrix. The polypeptide is Cytochrome c oxidase subunit 3 (MT-CO3) (Lycodon semicarinatus (Ryukyu odd-tooth snake)).